Here is a 219-residue protein sequence, read N- to C-terminus: tRNA (guanine-N(7)-)-methyltransferase (219 aa).

Positions 51, 76, 103, and 125 each coordinate S-adenosyl-L-methionine. Residue Asp-125 is part of the active site. Substrate contacts are provided by residues Lys-129, Asp-161, and 199–202 (TRYE).

This sequence belongs to the class I-like SAM-binding methyltransferase superfamily. TrmB family.

It catalyses the reaction guanosine(46) in tRNA + S-adenosyl-L-methionine = N(7)-methylguanosine(46) in tRNA + S-adenosyl-L-homocysteine. Its pathway is tRNA modification; N(7)-methylguanine-tRNA biosynthesis. Functionally, catalyzes the formation of N(7)-methylguanine at position 46 (m7G46) in tRNA. This chain is tRNA (guanine-N(7)-)-methyltransferase, found in Hyphomonas neptunium (strain ATCC 15444).